A 533-amino-acid polypeptide reads, in one-letter code: Flavin-containing monooxygenase 5 (533 aa).

Arg-5 carries the post-translational modification Dimethylated arginine. Residues 10–14 (GAGAS), Glu-33, and 41–42 (LW) contribute to the FAD site. Residue Ser-54 is modified to Phosphoserine. Tyr-56 is subject to Phosphotyrosine. The residue at position 58 (Ser-58) is a Phosphoserine. 62–63 (NT) contacts FAD. 196–199 (SGGD) is an NADP(+) binding site. Ser-280 carries the phosphoserine modification. Phosphothreonine is present on Thr-284. Phosphoserine is present on Ser-401. A helical membrane pass occupies residues 513–533 (LVTVRVLMLAVAFFAVILAYF).

Belongs to the FMO family. FAD serves as cofactor. Expressed in liver (at protein level). Expressed in the mucosal epithelium of the gastrointestinal tract.

It localises to the microsome membrane. The protein resides in the endoplasmic reticulum membrane. It carries out the reaction N,N-dimethylaniline + NADPH + O2 + H(+) = N,N-dimethylaniline N-oxide + NADP(+) + H2O. It catalyses the reaction NADPH + O2 + H(+) = H2O2 + NADP(+). The enzyme catalyses heptan-2-one + NADPH + O2 + H(+) = pentyl acetate + NADP(+) + H2O. The catalysed reaction is octan-3-one + NADPH + O2 + H(+) = pentyl propanoate + NADP(+) + H2O. It carries out the reaction octan-3-one + NADPH + O2 + H(+) = ethyl hexanoate + NADP(+) + H2O. It catalyses the reaction hexan-3-one + NADPH + O2 + H(+) = ethyl butanoate + NADP(+) + H2O. The enzyme catalyses hexan-3-one + NADPH + O2 + H(+) = propyl propanoate + NADP(+) + H2O. The catalysed reaction is heptan-4-one + NADPH + O2 + H(+) = propyl butanoate + NADP(+) + H2O. It carries out the reaction (2E)-geranial + NADPH + O2 + H(+) = (1E)-2,6-dimethylhepta-1,5-dien-1-yl formate + NADP(+) + H2O. It catalyses the reaction sulcatone + NADPH + O2 + H(+) = 4-methylpent-3-en-1-yl acetate + NADP(+) + H2O. Its function is as follows. Acts as a Baeyer-Villiger monooxygenase on a broad range of substrates. Catalyzes the insertion of an oxygen atom into a carbon-carbon bond adjacent to a carbonyl, which converts ketones to esters. Active on diverse carbonyl compounds, whereas soft nucleophiles are mostly non- or poorly reactive. In contrast with other forms of FMO it is non- or poorly active on 'classical' substrates such as drugs, pesticides, and dietary components containing soft nucleophilic heteroatoms. Able to oxidize drug molecules bearing a carbonyl group on an aliphatic chain, such as nabumetone and pentoxifylline. Also, in the absence of substrates, shows slow but yet significant NADPH oxidase activity. Acts as a positive modulator of cholesterol biosynthesis as well as glucose homeostasis, promoting metabolic aging via pleiotropic effects. The polypeptide is Flavin-containing monooxygenase 5 (Mus musculus (Mouse)).